A 261-amino-acid polypeptide reads, in one-letter code: MASAELSREENVYMAKLAEQAERYEEMVEFMEKVAKTVDSEELTVEERNLLSVAYKNVIGARRASWRIISSIEQKEEGRGNEDRVTLIKDYRGKIETELTKICDGILKLLESHLVPSSTAPESKVFYLKMKGDYYRYLAEFKTGAERKDAAENTMVAYKAAQDIALAELAPTHPIRLGLALNFSVFYYEILNSPDRACSLAKQAFDEAISELDTLSEESYKDSTLIMQLLHDNLTLWTSDISEDPAEEIREAPKHDLSEGQ.

Belongs to the 14-3-3 family.

Functionally, is associated with a DNA binding complex to bind to the G box, a well-characterized cis-acting DNA regulatory element found in plant genes. This is 14-3-3-like protein GF14-12 (GRF2) from Zea mays (Maize).